We begin with the raw amino-acid sequence, 317 residues long: Putative HTH-type transcriptional regulatory protein Mboo_0195 (317 aa).

The HTH cro/C1-type domain occupies 132-185 (LRELRERRSMSLGDLGQVLGVSRRTISKYESGMGTTLEVAIRIEEYFNTGVVES). Positions 143 to 162 (LGDLGQVLGVSRRTISKYES) form a DNA-binding region, H-T-H motif.

This Methanoregula boonei (strain DSM 21154 / JCM 14090 / 6A8) protein is Putative HTH-type transcriptional regulatory protein Mboo_0195.